A 2946-amino-acid chain; its full sequence is Neurobeachin (2946 aa).

The segment at 971-995 is disordered; the sequence is ENIKKGKKGNVSTISGLSSQTTGAK. A compositionally biased stretch (polar residues) spans 980-993; the sequence is NVSTISGLSSQTTG. Residues serine 1011 and serine 1014 each carry the phosphoserine modification. The WD 1 repeat unit spans residues 1326–1368; that stretch reads TTMFRIPEFKWSPMHQRLLTDLLFALETDVHVWRSHSTKSVMD. Disordered regions lie at residues 1490–1531, 1651–1675, 1711–1731, and 1841–1860; these read QRDR…LSPI, TIKE…HTDS, VKKS…PATS, and GAVD…VNGA. Polar residues predominate over residues 1497-1517; it reads SSHGSSKPQEVPQSVTATAAS. The residue at position 1529 (serine 1529) is a Phosphoserine. Serine 1714 and serine 1717 each carry phosphoserine. A compositionally biased stretch (polar residues) spans 1716-1731; the sequence is ESLTENPSETLKPATS. A compositionally biased stretch (low complexity) spans 1845-1855; the sequence is SGSSSSSSSSS. Serine 2138 carries the phosphoserine modification. The BEACH-type PH domain maps to 2147 to 2255; sequence NLAGPVVLST…TVKKVVYSLP (109 aa). A BEACH domain is found at 2274–2563; the sequence is ATPRQLYKSS…QLLIEPHPPR (290 aa). Phosphoserine is present on serine 2575. WD repeat units lie at residues 2718 to 2761, 2778 to 2818, 2860 to 2899, and 2902 to 2941; these read GHWD…HIIG, GHDH…RALE, EIND…QLYI, and GCDA…WHYE.

The protein belongs to the WD repeat neurobeachin family. In terms of assembly, interacts with RII subunit of PKA. Predominant in many brain structures. Also expressed at medium levels in spleen, thymus, prostate, testis and ovary. Low level expression is seen in heart, kidney, pancreas, skeletal muscle and intestine.

It localises to the cytoplasm. It is found in the membrane. Binds to type II regulatory subunits of protein kinase A and anchors/targets them to the membrane. May anchor the kinase to cytoskeletal and/or organelle-associated proteins. In Homo sapiens (Human), this protein is Neurobeachin.